Reading from the N-terminus, the 337-residue chain is Anthranilate phosphoribosyltransferase (337 aa).

5-phospho-alpha-D-ribose 1-diphosphate contacts are provided by residues Gly-82, 85-86, Thr-90, 92-95, 110-118, and Ser-122; these read GD, NIST, and KHGGRSVSS. Gly-82 is an anthranilate binding site. Ser-94 lines the Mg(2+) pocket. Arg-168 lines the anthranilate pocket. Positions 226 and 227 each coordinate Mg(2+).

Belongs to the anthranilate phosphoribosyltransferase family. As to quaternary structure, homodimer. Mg(2+) is required as a cofactor.

The catalysed reaction is N-(5-phospho-beta-D-ribosyl)anthranilate + diphosphate = 5-phospho-alpha-D-ribose 1-diphosphate + anthranilate. It participates in amino-acid biosynthesis; L-tryptophan biosynthesis; L-tryptophan from chorismate: step 2/5. Its function is as follows. Catalyzes the transfer of the phosphoribosyl group of 5-phosphorylribose-1-pyrophosphate (PRPP) to anthranilate to yield N-(5'-phosphoribosyl)-anthranilate (PRA). The protein is Anthranilate phosphoribosyltransferase of Francisella tularensis subsp. mediasiatica (strain FSC147).